A 580-amino-acid polypeptide reads, in one-letter code: MAGGGSDLSTRGLNGGVSQVANEMNHLPAHSQSLQRLFTEDQDVDEGLVYDTVFKHFKRHKLEISNAIKKTFPFLEGLRDRELITNKMFEDSEDSCRNLVPVQRVVYNVLSELEKTFNLSVLEALFSEVNMQEYPDLIHIYKSFKNAIQDKLSFQESDRKEREERPDIKLSLKQGEVPESPEARKESDQACGKMDTVDIANNSTLGKPKRKRRKKKGHGWSRMGTRTQKNNQQNDNSKADGQLVSSEKKANMNLKDLSKIRGRKRGKPGTHFTQSDRAPQKRVRSRASRKHKDETVDFQAPLLPVTCGGVKGILHKEKLEQGTLAKCIQTEDGKWFTPMEFEIKGGYARSKNWRLSVRCGGWPLRRLMEEGSLPNPPRIYYRNKKRILKSQNNSSVDPCMRNLDECEVCRDGGELFCCDTCSRVFHEDCHIPPVESEKTPWNCIFCRMKESPGSQQCCQESEVLERQMCPEEQLKCEFLLLKVYCCSESSFFAKIPYYYYIREACQGLKEPMWLDKIKKRLNEHGYPQVEGFVQDMRLIFQNHRASYKYKDFGQMGLRLEAEFEKDFKEVFAIQETNGNS.

Residues 33–149 enclose the HSR domain; the sequence is SLQRLFTEDQ…IYKSFKNAIQ (117 aa). The tract at residues 155 to 293 is disordered; that stretch reads QESDRKEREE…RSRASRKHKD (139 aa). A compositionally biased stretch (basic and acidic residues) spans 156–170; the sequence is ESDRKEREERPDIKL. Lys169 participates in a covalent cross-link: Glycyl lysine isopeptide (Lys-Gly) (interchain with G-Cter in SUMO2). Ser180 carries the post-translational modification Phosphoserine. Residues 207–219 are compositionally biased toward basic residues; it reads KPKRKRRKKKGHG. Polar residues predominate over residues 224-236; that stretch reads GTRTQKNNQQNDN. The segment covering 280 to 290 has biased composition (basic residues); the sequence is QKRVRSRASRK. Lys292 participates in a covalent cross-link: Glycyl lysine isopeptide (Lys-Gly) (interchain with G-Cter in SUMO2). One can recognise an SAND domain in the interval 293–374; it reads DETVDFQAPL…RRLMEEGSLP (82 aa). The PHD-type zinc-finger motif lies at 403-449; that stretch reads LDECEVCRDGGELFCCDTCSRVFHEDCHIPPVESEKTPWNCIFCRMK. Residues 467–570 enclose the Bromo domain; that stretch reads QMCPEEQLKC…AEFEKDFKEV (104 aa).

The protein is Nuclear body protein SP140-like protein (SP140L) of Homo sapiens (Human).